A 284-amino-acid polypeptide reads, in one-letter code: D-tagatose-1,6-bisphosphate aldolase subunit GatY (284 aa).

Catalysis depends on Asp-82, which acts as the Proton donor. The Zn(2+) site is built by His-83 and His-180. Residue Gly-181 participates in dihydroxyacetone phosphate binding. Position 208 (His-208) interacts with Zn(2+). Dihydroxyacetone phosphate is bound by residues 209 to 211 (GAS) and 230 to 233 (NVAT).

It belongs to the class II fructose-bisphosphate aldolase family. TagBP aldolase GatY subfamily. As to quaternary structure, forms a complex with GatZ. Zn(2+) serves as cofactor.

The enzyme catalyses D-tagatofuranose 1,6-bisphosphate = D-glyceraldehyde 3-phosphate + dihydroxyacetone phosphate. The protein operates within carbohydrate metabolism; D-tagatose 6-phosphate degradation; D-glyceraldehyde 3-phosphate and glycerone phosphate from D-tagatose 6-phosphate: step 2/2. Its function is as follows. Catalytic subunit of the tagatose-1,6-bisphosphate aldolase GatYZ, which catalyzes the reversible aldol condensation of dihydroxyacetone phosphate (DHAP or glycerone-phosphate) with glyceraldehyde 3-phosphate (G3P) to produce tagatose 1,6-bisphosphate (TBP). Requires GatZ subunit for full activity and stability. Is involved in the catabolism of galactitol. This Salmonella choleraesuis (strain SC-B67) protein is D-tagatose-1,6-bisphosphate aldolase subunit GatY.